A 154-amino-acid chain; its full sequence is SsrA-binding protein (154 aa).

This sequence belongs to the SmpB family.

The protein localises to the cytoplasm. In terms of biological role, required for rescue of stalled ribosomes mediated by trans-translation. Binds to transfer-messenger RNA (tmRNA), required for stable association of tmRNA with ribosomes. tmRNA and SmpB together mimic tRNA shape, replacing the anticodon stem-loop with SmpB. tmRNA is encoded by the ssrA gene; the 2 termini fold to resemble tRNA(Ala) and it encodes a 'tag peptide', a short internal open reading frame. During trans-translation Ala-aminoacylated tmRNA acts like a tRNA, entering the A-site of stalled ribosomes, displacing the stalled mRNA. The ribosome then switches to translate the ORF on the tmRNA; the nascent peptide is terminated with the 'tag peptide' encoded by the tmRNA and targeted for degradation. The ribosome is freed to recommence translation, which seems to be the essential function of trans-translation. The sequence is that of SsrA-binding protein from Ruminiclostridium cellulolyticum (strain ATCC 35319 / DSM 5812 / JCM 6584 / H10) (Clostridium cellulolyticum).